A 129-amino-acid chain; its full sequence is Lysozyme C (129 aa).

The region spanning 1–129 (KVYGRCELAA…VHAWIRGCRL (129 aa)) is the C-type lysozyme domain. Intrachain disulfides connect Cys6-Cys127, Cys30-Cys115, Cys64-Cys80, and Cys76-Cys94. Active-site residues include Glu35 and Asp52.

It belongs to the glycosyl hydrolase 22 family. As to quaternary structure, monomer.

It localises to the secreted. The catalysed reaction is Hydrolysis of (1-&gt;4)-beta-linkages between N-acetylmuramic acid and N-acetyl-D-glucosamine residues in a peptidoglycan and between N-acetyl-D-glucosamine residues in chitodextrins.. Functionally, lysozymes have primarily a bacteriolytic function; those in tissues and body fluids are associated with the monocyte-macrophage system and enhance the activity of immunoagents. The sequence is that of Lysozyme C (LYZ) from Lophophorus impejanus (Himalayan monal pheasant).